The sequence spans 508 residues: Transcriptional regulatory protein moc3 (508 aa).

The tract at residues 15–43 (NRTGSINSNPLYIPNPNVEPTPKPTKRRT) is disordered. Positions 46-76 (GCLTCRRRRIKCDETKPFCLNCTKTNRECEG) form a DNA-binding region, zn(2)-C6 fungal-type. Disordered stretches follow at residues 110-146 (ASSS…STVT) and 174-193 (NHNV…KPSV). A compositionally biased stretch (low complexity) spans 176 to 193 (NVPTNNSSSATSSTKPSV).

In terms of assembly, interacts with zfs1.

Its subcellular location is the nucleus. Induces sexual development and ascus formation. Also involved in calcium homeostasis. This Schizosaccharomyces pombe (strain 972 / ATCC 24843) (Fission yeast) protein is Transcriptional regulatory protein moc3 (moc3).